A 217-amino-acid chain; its full sequence is Small ribosomal subunit protein uS3c (217 aa).

Residues 47-119 form the KH type-2 domain; it reads VRTHIKSSSN…KLHIAIEKVA (73 aa).

It belongs to the universal ribosomal protein uS3 family. Part of the 30S ribosomal subunit.

It localises to the plastid. Its subcellular location is the chloroplast. The polypeptide is Small ribosomal subunit protein uS3c (rps3) (Pinus koraiensis (Korean pine)).